The following is a 310-amino-acid chain: Glutaminase 1 (310 aa).

S66, N117, E161, N168, Y192, Y244, and V262 together coordinate substrate. K294 is modified (N6-acetyllysine).

The protein belongs to the glutaminase family. In terms of assembly, homotetramer.

The catalysed reaction is L-glutamine + H2O = L-glutamate + NH4(+). This chain is Glutaminase 1, found in Escherichia coli O6:H1 (strain CFT073 / ATCC 700928 / UPEC).